The primary structure comprises 151 residues: UPF0208 membrane protein YPTB2595 (151 aa).

Transmembrane regions (helical) follow at residues 46–66 and 69–89; these read FGIR…IALG and LGPA…GLWW.

The protein belongs to the UPF0208 family.

It localises to the cell inner membrane. In Yersinia pseudotuberculosis serotype I (strain IP32953), this protein is UPF0208 membrane protein YPTB2595.